The sequence spans 465 residues: Putative multidrug resistance protein MdtD (465 aa).

A run of 13 helical transmembrane segments spans residues leucine 12–alanine 32, serine 49–alanine 69, isoleucine 72–cysteine 92, isoleucine 102–methionine 124, phenylalanine 138–valine 158, tryptophan 165–methionine 185, phenylalanine 195–aspartate 215, glycine 219–glycine 239, leucine 267–phenylalanine 287, isoleucine 290–serine 310, leucine 342–phenylalanine 362, leucine 393–leucine 413, and serine 430–phenylalanine 450.

The protein belongs to the major facilitator superfamily. TCR/Tet family.

It is found in the cell inner membrane. This Yersinia pseudotuberculosis serotype O:1b (strain IP 31758) protein is Putative multidrug resistance protein MdtD.